A 101-amino-acid chain; its full sequence is MAKTSMKAREAKRAQLVTKYAEKRLALKAIISAPATSEEDRWDAVLKLQALPRDSSLSRKRNRCSQTGRPHGFLRKFGLSRIKLREATMRGEVPGLRKASW.

This sequence belongs to the universal ribosomal protein uS14 family. Part of the 30S ribosomal subunit. Contacts proteins S3 and S10.

Its function is as follows. Binds 16S rRNA, required for the assembly of 30S particles and may also be responsible for determining the conformation of the 16S rRNA at the A site. In Shewanella denitrificans (strain OS217 / ATCC BAA-1090 / DSM 15013), this protein is Small ribosomal subunit protein uS14.